A 536-amino-acid polypeptide reads, in one-letter code: Membrane protein insertase YidC (536 aa).

Helical transmembrane passes span 3 to 23 (LQRNFFILIFFFISFLLWKTW), 346 to 366 (ICGNWGVSIILITFIIKGITF), 417 to 437 (GGCFPLFIQMPIFLALYYMLI), 454 to 474 (LSDQDPFYVLPILMGVTMFFI), and 494 to 514 (IPILFTVFFLWFPSGLVLYYL).

The protein belongs to the OXA1/ALB3/YidC family. Type 1 subfamily. Interacts with the Sec translocase complex via SecD. Specifically interacts with transmembrane segments of nascent integral membrane proteins during membrane integration.

The protein resides in the cell membrane. Its function is as follows. Required for the insertion and/or proper folding and/or complex formation of integral membrane proteins into the membrane. Involved in integration of membrane proteins that insert both dependently and independently of the Sec translocase complex, as well as at least some lipoproteins. Aids folding of multispanning membrane proteins. This chain is Membrane protein insertase YidC, found in Buchnera aphidicola subsp. Baizongia pistaciae (strain Bp).